Consider the following 634-residue polypeptide: tRNA uridine 5-carboxymethylaminomethyl modification enzyme MnmG (634 aa).

Residue Gly-14 to Gly-19 participates in FAD binding. Gly-279 to Phe-293 contacts NAD(+).

This sequence belongs to the MnmG family. Homodimer. Heterotetramer of two MnmE and two MnmG subunits. It depends on FAD as a cofactor.

Its subcellular location is the cytoplasm. In terms of biological role, NAD-binding protein involved in the addition of a carboxymethylaminomethyl (cmnm) group at the wobble position (U34) of certain tRNAs, forming tRNA-cmnm(5)s(2)U34. The chain is tRNA uridine 5-carboxymethylaminomethyl modification enzyme MnmG from Xanthomonas oryzae pv. oryzae (strain KACC10331 / KXO85).